The chain runs to 143 residues: Snake venom vascular endothelial growth factor toxin (143 aa).

Positions 1–24 (MAVYLLAVAILFCIQGWPSGTVQG) are cleaved as a signal peptide. The residue at position 25 (glutamate 25) is a Pyrrolidone carboxylic acid (Glu). Intrachain disulfides connect cysteine 38–cysteine 80, cysteine 69–cysteine 115, and cysteine 73–cysteine 117. Residues 117 to 143 (CRPRSPGDVNDGRNPKEGEPRARFPFV) form a disordered region.

Belongs to the PDGF/VEGF growth factor family. Snake venom VEGF subfamily. As to quaternary structure, homodimer; disulfide-linked. Interacts with VEGF receptor-1 (FLT1) with a high affinity, whereas it binds to VEGF receptor-2 (KDR) with a low affinity. Does not bind to VEGFR-3/FLT4 and neuropilin-1 (NRP1). In terms of tissue distribution, expressed by the venom gland.

It is found in the secreted. Snake venom VEGFs may contribute to venom dispersion and prey subjugation by inducing vascular permeability and hypotension. This protein activates the vascular endothelial growth factor receptor-1 (VEGFR-1/FLT1), and consequently promotes the proliferation and tissue factor production of endothelial cells, the neovascularization in the chicken chorioallantoic membrane, and increases vascular permeability. Also stimulates tissue-factor production and human monocyte chemotaxis. This is Snake venom vascular endothelial growth factor toxin from Protobothrops mucrosquamatus (Taiwan habu).